The following is a 300-amino-acid chain: MRTDRDNWDINTSVGSTALFVAASRALEATKPAPLAADQYAEVFCRAAGGEWAELVAGGVPEHPLRSEDFGQYFVSFQGARTRYFDTYFGKAIEAGVKQVVILASGLDSRAYRLDWAPGTTVFELDQPLVHQFKREALDQHGAEPKAVRAEISVDLREDWGKALQDKGFDPSEPSAWLVEGLLIYLPADAQERLFESIDQLAAPGSFVGIEQMTTYADVVFAMLVAGANESGDQANSDFFSLIYNEQRSEAATWFRCHGWDSERTELLDYLNFSGRTLPEPSQPAWYMFNSISLVSAVKG.

S-adenosyl-L-methionine contacts are provided by residues D126 and 155-156; that span reads DL.

The protein belongs to the UPF0677 family.

Exhibits S-adenosyl-L-methionine-dependent methyltransferase activity. The protein is Putative S-adenosyl-L-methionine-dependent methyltransferase MAB_4328c of Mycobacteroides abscessus (strain ATCC 19977 / DSM 44196 / CCUG 20993 / CIP 104536 / JCM 13569 / NCTC 13031 / TMC 1543 / L948) (Mycobacterium abscessus).